The following is a 273-amino-acid chain: Formamidopyrimidine-DNA glycosylase (273 aa).

Residue proline 2 is the Schiff-base intermediate with DNA of the active site. The Proton donor role is filled by glutamate 3. The active-site Proton donor; for beta-elimination activity is lysine 57. DNA-binding residues include histidine 91, arginine 110, and lysine 151. The FPG-type zinc finger occupies 236-270 (QVYGRKDEACNDCGTIIEAKVIGQRNSYFCPHCQM). The active-site Proton donor; for delta-elimination activity is the arginine 260.

This sequence belongs to the FPG family. Monomer. The cofactor is Zn(2+).

It catalyses the reaction Hydrolysis of DNA containing ring-opened 7-methylguanine residues, releasing 2,6-diamino-4-hydroxy-5-(N-methyl)formamidopyrimidine.. The catalysed reaction is 2'-deoxyribonucleotide-(2'-deoxyribose 5'-phosphate)-2'-deoxyribonucleotide-DNA = a 3'-end 2'-deoxyribonucleotide-(2,3-dehydro-2,3-deoxyribose 5'-phosphate)-DNA + a 5'-end 5'-phospho-2'-deoxyribonucleoside-DNA + H(+). Functionally, involved in base excision repair of DNA damaged by oxidation or by mutagenic agents. Acts as a DNA glycosylase that recognizes and removes damaged bases. Has a preference for oxidized purines, such as 7,8-dihydro-8-oxoguanine (8-oxoG). Has AP (apurinic/apyrimidinic) lyase activity and introduces nicks in the DNA strand. Cleaves the DNA backbone by beta-delta elimination to generate a single-strand break at the site of the removed base with both 3'- and 5'-phosphates. The sequence is that of Formamidopyrimidine-DNA glycosylase from Actinobacillus pleuropneumoniae serotype 5b (strain L20).